Consider the following 495-residue polypeptide: UPF0371 protein cgR_2887 (495 aa).

The protein belongs to the UPF0371 family.

The polypeptide is UPF0371 protein cgR_2887 (Corynebacterium glutamicum (strain R)).